The sequence spans 373 residues: Putative citrate synthase 2 (373 aa).

Residues H250 and E303 contribute to the active site.

Belongs to the citrate synthase family.

It catalyses the reaction oxaloacetate + acetyl-CoA + H2O = citrate + CoA + H(+). The protein operates within carbohydrate metabolism; tricarboxylic acid cycle; isocitrate from oxaloacetate: step 1/2. This chain is Putative citrate synthase 2 (citA), found in Mycobacterium bovis (strain ATCC BAA-935 / AF2122/97).